Consider the following 55-residue polypeptide: Serine protease inhibitor Kazal-type 1 (55 aa).

In terms of domain architecture, Kazal-like spans 2–55 (QGRDANCNYEFPGCPRNLEPVCGTDGNTYNNECLLCMENKKRDVPIRIQKDGPC). Cystine bridges form between cysteine 8-cysteine 37, cysteine 15-cysteine 34, and cysteine 23-cysteine 55.

It localises to the secreted. In terms of biological role, serine protease inhibitor which exhibits anti-trypsin activity. In the pancreas, protects against trypsin-catalyzed premature activation of zymogens. Functionally, in the male reproductive tract, binds to sperm heads where it modulates sperm capacitance by inhibiting calcium uptake and nitrogen oxide (NO) production. The sequence is that of Serine protease inhibitor Kazal-type 1 (SPINK1) from Monodelphis domestica (Gray short-tailed opossum).